Reading from the N-terminus, the 303-residue chain is Probable 5-dehydro-4-deoxyglucarate dehydratase (303 aa).

This sequence belongs to the DapA family.

The catalysed reaction is 5-dehydro-4-deoxy-D-glucarate + H(+) = 2,5-dioxopentanoate + CO2 + H2O. It functions in the pathway carbohydrate acid metabolism; D-glucarate degradation; 2,5-dioxopentanoate from D-glucarate: step 2/2. The protein is Probable 5-dehydro-4-deoxyglucarate dehydratase of Acinetobacter baumannii (strain SDF).